Consider the following 470-residue polypeptide: Cytochrome P450 monooxygenase sirC (470 aa).

The helical transmembrane segment at 12–34 (LRGMVVGTIMLLCYRYGLALSIL) threads the bilayer. Asn399 carries an N-linked (GlcNAc...) asparagine glycan. Residue Cys410 coordinates heme.

Belongs to the cytochrome P450 family. Heme is required as a cofactor.

The protein localises to the membrane. It functions in the pathway mycotoxin biosynthesis. Its function is as follows. Cytochrome P450 monooxygenase; part of the gene cluster that mediates the biosynthesis of sirodesmin PL, an epipolythiodioxopiperazine (ETP) characterized by a disulfide bridged cyclic dipeptide and that acts as a phytotoxin which is involved in the blackleg didease of canola. SirD catalyzes the O-prenylation of L-tyrosine (L-Tyr) in the presence of dimethylallyl diphosphate (DMAPP) to yield 4-O-dimethylallyl-L-Tyr, and therefore represents probably the first pathway-specific enzyme in the biosynthesis of sirodesmin PL. 4-O-dimethylallyl-L-Tyr, then undergoes condensation with L-Ser in a reaction catalyzed by the non-ribosomal peptide synthase sirP to form the diketopiperazine (DKP) backbone. Further bishydroxylation of the DKP performed by the cytochrome P450 monooxygenase sirC leads to the production of the intermediate phomamide. This step is essential to form the reactive thiol group required for toxicity of sirodesmin PL. The next steps of sirodesmin biosynthesis are not well understood yet, but some predictions could be made from intermediate compounds identification. Phomamide is converted into phomalizarine via oxidation, probably by sirT. Further oxidation, methylation (by sirM or sirN) and reduction steps convert phomalizarine to deacetyl sirodesmin. Finally, acetyltransferase sirH probably acetylates deacetyl sirodesmin to produce sirodesmin PL. The sequence is that of Cytochrome P450 monooxygenase sirC from Leptosphaeria maculans (Blackleg fungus).